A 405-amino-acid chain; its full sequence is Probable dual-specificity RNA methyltransferase RlmN (405 aa).

The segment covering 1–15 has biased composition (low complexity); that stretch reads MSSTGSSVSTSGLVL. The tract at residues 1 to 34 is disordered; the sequence is MSSTGSSVSTSGLVLPSTPLAEPGKEVPLVVNTP. The active-site Proton acceptor is the E130. The region spanning 142–386 is the Radical SAM core domain; the sequence is SAARATLCLS…VTVRDTRGSE (245 aa). Cysteines 149 and 391 form a disulfide. 3 residues coordinate [4Fe-4S] cluster: C156, C160, and C163. Residues 211–212, S245, 268–270, and N348 contribute to the S-adenosyl-L-methionine site; these read GE and SLH. C391 acts as the S-methylcysteine intermediate in catalysis.

Belongs to the radical SAM superfamily. RlmN family. [4Fe-4S] cluster is required as a cofactor.

Its subcellular location is the cytoplasm. The enzyme catalyses adenosine(2503) in 23S rRNA + 2 reduced [2Fe-2S]-[ferredoxin] + 2 S-adenosyl-L-methionine = 2-methyladenosine(2503) in 23S rRNA + 5'-deoxyadenosine + L-methionine + 2 oxidized [2Fe-2S]-[ferredoxin] + S-adenosyl-L-homocysteine. It catalyses the reaction adenosine(37) in tRNA + 2 reduced [2Fe-2S]-[ferredoxin] + 2 S-adenosyl-L-methionine = 2-methyladenosine(37) in tRNA + 5'-deoxyadenosine + L-methionine + 2 oxidized [2Fe-2S]-[ferredoxin] + S-adenosyl-L-homocysteine. Its function is as follows. Specifically methylates position 2 of adenine 2503 in 23S rRNA and position 2 of adenine 37 in tRNAs. The chain is Probable dual-specificity RNA methyltransferase RlmN from Cutibacterium acnes (strain DSM 16379 / KPA171202) (Propionibacterium acnes).